Here is a 491-residue protein sequence, read N- to C-terminus: Inositol-pentakisphosphate 2-kinase (491 aa).

The EXKPK motif motif lies at 136–140 (EIKPK). Ser-282 carries the phosphoserine modification.

Belongs to the IPK1 type 2 family. In terms of tissue distribution, ubiquitously expressed, with high expression in heart, brain, testis and placenta.

It is found in the cytoplasm. Its subcellular location is the nucleus. It catalyses the reaction 1D-myo-inositol 1,3,4,5,6-pentakisphosphate + ATP = 1D-myo-inositol hexakisphosphate + ADP + H(+). Phosphorylates Ins(1,3,4,5,6)P5 at position 2 to form Ins(1,2,3,4,5,6)P6 (InsP6 or phytate). InsP6 is involved in many processes such as mRNA export, non-homologous end-joining, endocytosis, ion channel regulation. It also protects cells from TNF-alpha-induced apoptosis. The sequence is that of Inositol-pentakisphosphate 2-kinase (IPPK) from Homo sapiens (Human).